Reading from the N-terminus, the 418-residue chain is Putative ion-transport protein YfeO (418 aa).

The next 10 membrane-spanning stretches (helical) occupy residues 15–37, 57–79, 99–118, 149–171, 186–208, 221–243, 258–280, 301–323, 343–363, and 376–398; these read PAVA…ASVL, LWII…FSQG, ALPR…VSLG, ILAS…LIFS, LFAP…HPHF, TDIL…AVWC, VLVL…PVSL, YFLL…FRGG, VPAV…VLVV, and VVVP…WLLL.

This sequence belongs to the chloride channel (TC 2.A.49) family.

The protein localises to the cell membrane. The sequence is that of Putative ion-transport protein YfeO (yfeO) from Shigella flexneri.